The chain runs to 995 residues: DExH-box ATP-dependent RNA helicase DExH10 (995 aa).

Residues 1–42 are disordered; it reads MSAQMEEPETLGKRKESESSKLRSDETPTPEPRTKRRSLKRA. Position 2 is an N-acetylserine (Ser2). The segment covering 10-26 has biased composition (basic and acidic residues); it reads TLGKRKESESSKLRSDE. The 157-residue stretch at 90–246 folds into the Helicase ATP-binding domain; it reads VACLERKESI…WICYLHKQPC (157 aa). 103–110 provides a ligand contact to ATP; the sequence is AHTSAGKT. A DEIH box motif is present at residues 194–197; that stretch reads DEIH. A disordered region spans residues 290–318; that stretch reads DTFPKPKSNDGKKSANGKSGGRGAKGGGG. Gly residues predominate over residues 307-318; that stretch reads KSGGRGAKGGGG. In terms of domain architecture, Helicase C-terminal spans 323 to 524; sequence DVYKIVKMIM…LSYYTILNLL (202 aa).

Belongs to the DExH box helicase family. SKI2 subfamily. As to expression, expressed in inflorescences, leaves, stems, and roots.

Its subcellular location is the nucleus. The protein localises to the nucleoplasm. It carries out the reaction ATP + H2O = ADP + phosphate + H(+). ATP-dependent RNA helicase that associates with the RNA exosome complex, with the cap binding complex (CBC) and with the NEXT-like complex. Involved in the degradation of a large number of non-coding nuclear exosome substrates such as snoRNA and miRNA precursors, incompletely spliced mRNAs, and spurious transcripts produced from pseudogenes and intergenic regions. Involved in the maintenance of homeotic B and C gene expression in the reproductive whorls. Regulates floral organ spacing and identity, probably through the regulation of protein synthesis or mRNA degradation. This Arabidopsis thaliana (Mouse-ear cress) protein is DExH-box ATP-dependent RNA helicase DExH10.